The following is a 174-amino-acid chain: Gamma-crystallin E (174 aa).

2 consecutive Beta/gamma crystallin 'Greek key' domains span residues 2–40 and 41–83; these read GKIT…RVDS and GCWM…RLIP. The tract at residues 84-87 is connecting peptide; that stretch reads HSSS. Beta/gamma crystallin 'Greek key' domains lie at 88–128 and 129–171; these read HRIR…HVME and GYWV…RRIM.

It belongs to the beta/gamma-crystallin family. In terms of tissue distribution, detected in the superior olivary complex and fibers of the ventral aoustic stria of the auditory hindbrain.

Functionally, crystallins are the dominant structural components of the vertebrate eye lens. In Rattus norvegicus (Rat), this protein is Gamma-crystallin E (Cryge).